Consider the following 276-residue polypeptide: Undecaprenyl-diphosphatase 2 (276 aa).

8 helical membrane-spanning segments follow: residues 1–21 (MSLW…LFPV), 44–64 (QLLP…LWYF), 87–107 (GHLM…GLLL), 114–134 (VFHD…LLWL), 150–170 (LTFK…IPGF), 190–210 (AAEF…LLEL), 222–242 (DALL…RFLM), and 251–271 (LASF…WFMF).

The protein belongs to the UppP family.

The protein resides in the cell inner membrane. The catalysed reaction is di-trans,octa-cis-undecaprenyl diphosphate + H2O = di-trans,octa-cis-undecaprenyl phosphate + phosphate + H(+). In terms of biological role, catalyzes the dephosphorylation of undecaprenyl diphosphate (UPP). Confers resistance to bacitracin. This Burkholderia thailandensis (strain ATCC 700388 / DSM 13276 / CCUG 48851 / CIP 106301 / E264) protein is Undecaprenyl-diphosphatase 2.